Here is a 411-residue protein sequence, read N- to C-terminus: Mannan endo-1,4-beta-mannosidase 1 (411 aa).

The first 17 residues, 1 to 17 (MLNILPFFLFFLPFLIG), serve as a signal peptide directing secretion. Asn33 is a glycosylation site (N-linked (GlcNAc...) asparagine). Residues Trp87 and Asn197 each coordinate substrate. Residue Glu198 is the Proton donor of the active site. Asn202 carries an N-linked (GlcNAc...) asparagine glycan. Tyr277 contacts substrate. The active-site Nucleophile is Glu319. Substrate is bound at residue Trp361. 2 N-linked (GlcNAc...) asparagine glycosylation sites follow: Asn366 and Asn384.

This sequence belongs to the glycosyl hydrolase 5 (cellulase A) family. As to expression, expressed in roots, stems and flowers.

The protein resides in the secreted. The catalysed reaction is Random hydrolysis of (1-&gt;4)-beta-D-mannosidic linkages in mannans, galactomannans and glucomannans.. This is Mannan endo-1,4-beta-mannosidase 1 (MAN1) from Arabidopsis thaliana (Mouse-ear cress).